Here is a 690-residue protein sequence, read N- to C-terminus: Elongation factor G (690 aa).

One can recognise a tr-type G domain in the interval 8-283; it reads ERYRNFGIMA…AVVDFMPSPL (276 aa). GTP contacts are provided by residues 17-24, 81-85, and 135-138; these read AHIDAGKT, DTPGH, and NKLD.

It belongs to the TRAFAC class translation factor GTPase superfamily. Classic translation factor GTPase family. EF-G/EF-2 subfamily.

It is found in the cytoplasm. In terms of biological role, catalyzes the GTP-dependent ribosomal translocation step during translation elongation. During this step, the ribosome changes from the pre-translocational (PRE) to the post-translocational (POST) state as the newly formed A-site-bound peptidyl-tRNA and P-site-bound deacylated tRNA move to the P and E sites, respectively. Catalyzes the coordinated movement of the two tRNA molecules, the mRNA and conformational changes in the ribosome. In Novosphingobium aromaticivorans (strain ATCC 700278 / DSM 12444 / CCUG 56034 / CIP 105152 / NBRC 16084 / F199), this protein is Elongation factor G.